The following is a 366-amino-acid chain: Terpene cyclase-like protein flvF (366 aa).

The protein belongs to the terpene synthase family. In terms of assembly, homodimer.

The catalysed reaction is N,N-dimethyl-cadaverine + 2,6,9-trimethyl-13-oxatetracyclo[6.3.1.1(6,9).0(1,5)]tridecane carbocation = pre-flavunoidine + H(+). It functions in the pathway secondary metabolite biosynthesis; terpenoid biosynthesis. Terpene cyclase-like protein; part of the gene cluster that mediates the biosynthesis of flavunoidine, an alkaloidal terpenoid with a tetracyclic cage-like core connected to dimethylcadaverine via a C-N bond and acylated with 5,5-dimethyl-L-pipecolate. The tetracyclic core is synthesized by the terpene cyclase flvE and the cytochrome P450 monooxygenase flvD. The terpene cyclase flvE catalyzes the cyclization of farnesyl pyrophosphate (FPP) to form (1R,4R,5S)-(+)-acoradiene and the cytochrome P450 monooxygenase flvD is then responsible for oxidative conversion of (1R,4R,5S)-(+)-acoradiene into the tetracyclic cage present in the final product flavunoidine. In parallel, the N-methyltransferase flvH dimethylates L-lysine to give N,N-dimethyl-L-Lysin which is decarboxylated by flvG to afford dimethylcadaverine. The terpene cyclase-like protein flvF is the enzyme that attaches the dimethylcadaverine precusor at the C-7 of the tetracyclic cage to yield pre-flavunoidine. The cytochrome monooxygenase flvC hydroxylates the C-10 position of pre-flavunoidine whereas the NRPS flvI acylates the terpenoid core at the hydroxylated C-10 with dimethylpipecolate to yield final flavunoidine. The bifunctional enzyme flvA and the dehydrogenase flvB are responsible for the synthesis of the dimethylpipecolate precursor. The PLP-dependent lyase domain of flvA might use L-O-acetyl-homoserine and alpha-keto-isovalerate to form an intermediary ketone that can cyclize intramolecularly to yield an imine. The imine can be reduced by flvB to yield the 6-carboxylated pipecolate. The C-terminal alpha-KG-dependent oxygenase domain of flvA is then proposed to catalyze the decarboxylation to yield dimethylpipecolate. This chain is Terpene cyclase-like protein flvF, found in Aspergillus flavus (strain ATCC 200026 / FGSC A1120 / IAM 13836 / NRRL 3357 / JCM 12722 / SRRC 167).